The following is a 284-amino-acid chain: MPELPEVETVRRGLEPVMTGQRIIEADIRRPDLRWPLPANMQTRLEGKRILRLARRSKYILAELDSGETLIIHLGMSGRILIHGGQAPGAFHHALPSLEKHDHVVLDFDTGARVVFNDARRFGAMDLCETTEIDQHPMLATLGPEPLGNAFHEAYLTTRLKGRMTPIKSALLDQKVVAGLGNIYVCEALFQAGISPLRKAGRVSETRIASLVPIIRTVLGDAIEAGGSSLRDYRQTDGDLGYFQHRFRVYDRENAPCVTAGCPDVVRRVVQSGRSSFYCPSCQR.

Proline 2 (schiff-base intermediate with DNA) is an active-site residue. Glutamate 3 functions as the Proton donor in the catalytic mechanism. The active-site Proton donor; for beta-elimination activity is the lysine 58. DNA contacts are provided by histidine 101, arginine 120, and arginine 163. The FPG-type zinc finger occupies 248–284 (RVYDRENAPCVTAGCPDVVRRVVQSGRSSFYCPSCQR). Arginine 274 serves as the catalytic Proton donor; for delta-elimination activity.

Belongs to the FPG family. Monomer. Zn(2+) serves as cofactor.

The catalysed reaction is Hydrolysis of DNA containing ring-opened 7-methylguanine residues, releasing 2,6-diamino-4-hydroxy-5-(N-methyl)formamidopyrimidine.. It catalyses the reaction 2'-deoxyribonucleotide-(2'-deoxyribose 5'-phosphate)-2'-deoxyribonucleotide-DNA = a 3'-end 2'-deoxyribonucleotide-(2,3-dehydro-2,3-deoxyribose 5'-phosphate)-DNA + a 5'-end 5'-phospho-2'-deoxyribonucleoside-DNA + H(+). Its function is as follows. Involved in base excision repair of DNA damaged by oxidation or by mutagenic agents. Acts as a DNA glycosylase that recognizes and removes damaged bases. Has a preference for oxidized purines, such as 7,8-dihydro-8-oxoguanine (8-oxoG). Has AP (apurinic/apyrimidinic) lyase activity and introduces nicks in the DNA strand. Cleaves the DNA backbone by beta-delta elimination to generate a single-strand break at the site of the removed base with both 3'- and 5'-phosphates. This is Formamidopyrimidine-DNA glycosylase from Dinoroseobacter shibae (strain DSM 16493 / NCIMB 14021 / DFL 12).